Reading from the N-terminus, the 376-residue chain is Succinyl-diaminopimelate desuccinylase (376 aa).

Histidine 67 serves as a coordination point for Zn(2+). The active site involves aspartate 69. Position 100 (aspartate 100) interacts with Zn(2+). The active-site Proton acceptor is glutamate 134. Zn(2+) is bound by residues glutamate 135, glutamate 163, and histidine 349.

This sequence belongs to the peptidase M20A family. DapE subfamily. Homodimer. Requires Zn(2+) as cofactor. The cofactor is Co(2+).

The enzyme catalyses N-succinyl-(2S,6S)-2,6-diaminopimelate + H2O = (2S,6S)-2,6-diaminopimelate + succinate. It functions in the pathway amino-acid biosynthesis; L-lysine biosynthesis via DAP pathway; LL-2,6-diaminopimelate from (S)-tetrahydrodipicolinate (succinylase route): step 3/3. Catalyzes the hydrolysis of N-succinyl-L,L-diaminopimelic acid (SDAP), forming succinate and LL-2,6-diaminopimelate (DAP), an intermediate involved in the bacterial biosynthesis of lysine and meso-diaminopimelic acid, an essential component of bacterial cell walls. The polypeptide is Succinyl-diaminopimelate desuccinylase (Pseudoalteromonas translucida (strain TAC 125)).